The sequence spans 294 residues: Potassium-transporting ATPase subunit beta (294 aa).

The Cytoplasmic portion of the chain corresponds to 1 to 36 (MAALQEKKSCSQRMAEFRHYCWNPDTGQMLGRTPAR). A helical; Signal-anchor for type II membrane protein membrane pass occupies residues 37-57 (WVWISLYYAGFYVVMTGLFAL). The Extracellular segment spans residues 58-294 (CIYVLMQTID…KVEFKLTIQK (237 aa)). Residues Asn-99, Asn-103, Asn-130, Asn-146, and Asn-161 are each glycosylated (N-linked (GlcNAc...) asparagine). Cysteines 131 and 152 form a disulfide. Cys-162 and Cys-178 are joined by a disulfide. N-linked (GlcNAc...) asparagine glycosylation is found at Asn-193 and Asn-225. The interval 194–294 (NTAPRVDCTF…KVEFKLTIQK (101 aa)) is immunoglobulin-like. Residues Cys-201 and Cys-266 are joined by a disulfide bond.

The protein belongs to the X(+)/potassium ATPases subunit beta family. In terms of assembly, the ATPase pump is composed of two subunits: alpha (catalytic) and beta (regulatory). Interacts with alpha subunit ATP12A; this interaction is required for the formation of a functionally active pump and targeting at the plasma membrane. Interacts (via N-terminus) with alpha subunit ATP4A (via the P-domain). Post-translationally, N-glycosylation is necessary for assembly and functional expression of the pump at the plasma membrane. As to expression, expressed in parietal cells (at protein level).

The protein localises to the apical cell membrane. Its subcellular location is the cell membrane. Its function is as follows. The beta subunit of the gastric H(+)/K(+) ATPase pump which transports H(+) ions in exchange for K(+) ions across the apical membrane of parietal cells. Plays a structural and regulatory role in the assembly and membrane targeting of a functionally active pump. Within a transport cycle, the transfer of a H(+) ion across the membrane is coupled to ATP hydrolysis and is associated with a transient phosphorylation of the alpha subunit that shifts the pump conformation from inward-facing (E1) to outward-facing state (E2). Interacts with the phosphorylation domain of the alpha subunit and functions as a ratchet, stabilizing the lumenal-open E2 conformation and preventing the reverse reaction of the transport cycle. The sequence is that of Potassium-transporting ATPase subunit beta (Atp4b) from Mus musculus (Mouse).